An 85-amino-acid polypeptide reads, in one-letter code: HssA/B-like protein 62 (85 aa).

Belongs to the hssA/B family.

In Dictyostelium discoideum (Social amoeba), this protein is HssA/B-like protein 62 (hssl62).